The primary structure comprises 240 residues: DNA repair protein RecO (240 aa).

This sequence belongs to the RecO family.

Involved in DNA repair and RecF pathway recombination. This chain is DNA repair protein RecO, found in Actinobacillus pleuropneumoniae serotype 7 (strain AP76).